The primary structure comprises 184 residues: Dual specificity protein phosphatase 22 (184 aa).

Gly2 carries the N-myristoyl glycine lipid modification. The Tyrosine-protein phosphatase domain occupies 4–144; it reads GMSQILPGLY…LQEFEKHEVH (141 aa). Cys88 (phosphocysteine intermediate) is an active-site residue. A protein-binding residues include Leu89, Ala90, Val92, Ser93, and Arg94.

This sequence belongs to the protein-tyrosine phosphatase family. Non-receptor class dual specificity subfamily. In terms of assembly, monomer. Interacts with LCK; the interaction is direct. Interacts with UBR2; the interaction is direct. In terms of processing, myristoylation regulates subcellular location, and is necessary for activation of JNK.

It is found in the cytoplasm. The catalysed reaction is O-phospho-L-tyrosyl-[protein] + H2O = L-tyrosyl-[protein] + phosphate. It catalyses the reaction O-phospho-L-seryl-[protein] + H2O = L-seryl-[protein] + phosphate. It carries out the reaction O-phospho-L-threonyl-[protein] + H2O = L-threonyl-[protein] + phosphate. Its function is as follows. Dual specificity phosphatase; can dephosphorylate both phosphotyrosine and phosphoserine or phosphothreonine residues. Activates the JNK signaling pathway. Inhibits T-cell receptor signaling and T-cell mediated immune responses, acting, at least in part, by inducing degradation of E3 ubiquitin ligase UBR2. Dephosphorylates and thereby induces 'Lys-48'-linked ubiquitination of UBR2, leading to proteasomal degradation of UBR2. Dephosphorylates and thereby inactivates tyrosine kinase LCK. Inhibits UBR2-mediated 'Lys-63'-linked ubiquitination of LCK. May play a role in B-cell receptor (BCR) signaling and B-cell function. In Mus musculus (Mouse), this protein is Dual specificity protein phosphatase 22 (Dusp22).